The sequence spans 447 residues: tRNA-2-methylthio-N(6)-dimethylallyladenosine synthase (447 aa).

One can recognise an MTTase N-terminal domain in the interval 3–120 (KKLYIETHGC…LPEMIDAART (118 aa)). [4Fe-4S] cluster contacts are provided by C12, C49, C83, C157, C161, and C164. Residues 143-375 (RVDGPSAFVS…QHRINQYGFE (233 aa)) enclose the Radical SAM core domain. In terms of domain architecture, TRAM spans 378–442 (RRMVGTVQRI…PHSLRGTLLD (65 aa)).

Belongs to the methylthiotransferase family. MiaB subfamily. Monomer. [4Fe-4S] cluster serves as cofactor.

The protein resides in the cytoplasm. The catalysed reaction is N(6)-dimethylallyladenosine(37) in tRNA + (sulfur carrier)-SH + AH2 + 2 S-adenosyl-L-methionine = 2-methylsulfanyl-N(6)-dimethylallyladenosine(37) in tRNA + (sulfur carrier)-H + 5'-deoxyadenosine + L-methionine + A + S-adenosyl-L-homocysteine + 2 H(+). Functionally, catalyzes the methylthiolation of N6-(dimethylallyl)adenosine (i(6)A), leading to the formation of 2-methylthio-N6-(dimethylallyl)adenosine (ms(2)i(6)A) at position 37 in tRNAs that read codons beginning with uridine. This Ectopseudomonas mendocina (strain ymp) (Pseudomonas mendocina) protein is tRNA-2-methylthio-N(6)-dimethylallyladenosine synthase.